The following is a 473-amino-acid chain: MLRNRLFKTPHQTGFQWRLGAPATGITIRNQPIRSYSGLRGNFLIDKRLSPVKFNKYSPSDIVFYNIGSSRLYSTETPTPSKVKEAPKQVAAEETKPTTVVKKPSIWQRVKGGVLHFWDGTKLLGVEIKISSKLVYKMAVGYELTRRESRQLTRTLKDIGRLVPFSVFVVVPFAELLLPIAVKLFPNLLPSTFEDAKDKEAKKAQLRKTRNEVSNMLRSTLKSGKFTFSNETRESKEFRDFFQKVRTSGQSPSREELIEVCKYFKDDITLDNLSRAQLVAMCRYMNLNAFGTDPLLRYNIRHRMRQIRRDDRAIYIEGINSLSIPELFNACNSRGIRTQGLSPAKLKEELSVWLDMRIKHGIPSVILMLSNAFSYGYNEGTYDSRWDALQDTLASIPDELYHETVVDMPTKQVSNKERLEILREQEELIEEEAEHVAEHPDLAKKQTEENKATSKPAVSAKSPESNIPKNERK.

The N-terminal 73 residues, 1–73 (MLRNRLFKTP…FYNIGSSRLY (73 aa)), are a transit peptide targeting the mitochondrion. Over 74-161 (STETPTPSKV…LTRTLKDIGR (88 aa)) the chain is Mitochondrial intermembrane. The chain crosses the membrane as a helical span at residues 162–182 (LVPFSVFVVVPFAELLLPIAV). At 183 to 473 (KLFPNLLPST…ESNIPKNERK (291 aa)) the chain is on the mitochondrial matrix side. The 194-residue stretch at 205–398 (QLRKTRNEVS…LQDTLASIPD (194 aa)) folds into the Letm1 RBD domain. The disordered stretch occupies residues 430-473 (EEEAEHVAEHPDLAKKQTEENKATSKPAVSAKSPESNIPKNERK). Basic and acidic residues predominate over residues 434-452 (EHVAEHPDLAKKQTEENKA). A compositionally biased stretch (polar residues) spans 462–473 (SPESNIPKNERK).

Its subcellular location is the mitochondrion inner membrane. Involved in mitochondrial potassium homeostasis through the mitochondrial K(+)/H(+) exchange regulation. The chain is LETM1 domain-containing protein mdm28, mitochondrial (mdm28) from Schizosaccharomyces pombe (strain 972 / ATCC 24843) (Fission yeast).